Here is a 128-residue protein sequence, read N- to C-terminus: Translation initiation factor 5A (128 aa).

Hypusine is present on lysine 35.

It belongs to the eIF-5A family.

It is found in the cytoplasm. Its function is as follows. Functions by promoting the formation of the first peptide bond. The protein is Translation initiation factor 5A (eif5a) of Methanosarcina mazei (strain ATCC BAA-159 / DSM 3647 / Goe1 / Go1 / JCM 11833 / OCM 88) (Methanosarcina frisia).